A 145-amino-acid chain; its full sequence is D-aminoacyl-tRNA deacylase (145 aa).

The Gly-cisPro motif, important for rejection of L-amino acids signature appears at 137 to 138 (GP).

It belongs to the DTD family. In terms of assembly, homodimer.

Its subcellular location is the cytoplasm. The enzyme catalyses glycyl-tRNA(Ala) + H2O = tRNA(Ala) + glycine + H(+). It carries out the reaction a D-aminoacyl-tRNA + H2O = a tRNA + a D-alpha-amino acid + H(+). Functionally, an aminoacyl-tRNA editing enzyme that deacylates mischarged D-aminoacyl-tRNAs. Also deacylates mischarged glycyl-tRNA(Ala), protecting cells against glycine mischarging by AlaRS. Acts via tRNA-based rather than protein-based catalysis; rejects L-amino acids rather than detecting D-amino acids in the active site. By recycling D-aminoacyl-tRNA to D-amino acids and free tRNA molecules, this enzyme counteracts the toxicity associated with the formation of D-aminoacyl-tRNA entities in vivo and helps enforce protein L-homochirality. In Azotobacter vinelandii (strain DJ / ATCC BAA-1303), this protein is D-aminoacyl-tRNA deacylase.